The chain runs to 198 residues: Small ribosomal subunit protein uS11 (198 aa).

Composition is skewed to low complexity over residues 1-11 (MSGTEAGAGEP) and 19-58 (EAAQPEAGAPDAGTPEASAPEAGAAQPEAGTQPEAGTAQP). Disordered stretches follow at residues 1-72 (MSGT…TPAD) and 178-198 (DVTPIPHDTTRKKGGKRGRRV). Positions 187–198 (TRKKGGKRGRRV) are enriched in basic residues.

This sequence belongs to the universal ribosomal protein uS11 family. In terms of assembly, part of the 30S ribosomal subunit.

Its function is as follows. Located on the platform of the 30S subunit. This Cenarchaeum symbiosum (strain A) protein is Small ribosomal subunit protein uS11.